A 131-amino-acid polypeptide reads, in one-letter code: D-ribose pyranase (131 aa).

His20 (proton donor) is an active-site residue. Substrate is bound by residues Asp28, His98, and 120–122 (YAN).

Belongs to the RbsD / FucU family. RbsD subfamily. As to quaternary structure, homodecamer.

It localises to the cytoplasm. It catalyses the reaction beta-D-ribopyranose = beta-D-ribofuranose. The protein operates within carbohydrate metabolism; D-ribose degradation; D-ribose 5-phosphate from beta-D-ribopyranose: step 1/2. Functionally, catalyzes the interconversion of beta-pyran and beta-furan forms of D-ribose. This chain is D-ribose pyranase, found in Bacillus cereus (strain ZK / E33L).